The following is a 280-amino-acid chain: DegV domain-containing protein TTE1491 (280 aa).

Positions 4 to 279 (IAIVTDSLSD…PDAAGVFFEE (276 aa)) constitute a DegV domain. Residues T61 and S93 each contribute to the hexadecanoate site.

Functionally, may bind long-chain fatty acids, such as palmitate, and may play a role in lipid transport or fatty acid metabolism. The sequence is that of DegV domain-containing protein TTE1491 from Caldanaerobacter subterraneus subsp. tengcongensis (strain DSM 15242 / JCM 11007 / NBRC 100824 / MB4) (Thermoanaerobacter tengcongensis).